We begin with the raw amino-acid sequence, 433 residues long: Protoheme IX farnesyltransferase 2 (433 aa).

Positions 1–164 (MQRFTGLVTA…LTKPRLMWLL (164 aa)) are unknown. Helical transmembrane passes span 4–24 (FTGLVTATTLATYLLVVLGVA), 35–55 (AVAHYVTAGAVWLLLVAAAAL), 67–87 (WGVTAAAVAYPAQAAVGMAVL), 95–115 (LHLFGGVGVFALLLITLTWHL), 160–180 (LMWLLCLLALSGMALATVTGA), 184–204 (GVTIAATLFGGVLAVGAAGTF), 236–256 (AFGVGLLVVSMAVLVWLVNPL), 257–277 (AAALTAVAVVYYAVVYTVVLK), 282–304 (WNTVIGGGAGALPAVIGWAAVAG), 308–330 (LPALLLAAVVFCWTPAHFYNLAI), 357–377 (ILYWLGATLLVAGALGAVAGF), 378–398 (GPVYALTSAVVGFGFLWTVVV), and 413–433 (HASNAYLGALLVAILVETMVI). The interval 165 to 430 (CLLALSGMAL…ALLVAILVET (266 aa)) is protoheme IX prenyltransferase.

In the C-terminal section; belongs to the UbiA prenyltransferase family. Protoheme IX farnesyltransferase subfamily.

The protein localises to the cell membrane. It carries out the reaction heme b + (2E,6E)-farnesyl diphosphate + H2O = Fe(II)-heme o + diphosphate. It functions in the pathway porphyrin-containing compound metabolism; heme O biosynthesis; heme O from protoheme: step 1/1. Its function is as follows. Converts heme B (protoheme IX) to heme O by substitution of the vinyl group on carbon 2 of heme B porphyrin ring with a hydroxyethyl farnesyl side group. In Natronomonas pharaonis (strain ATCC 35678 / DSM 2160 / CIP 103997 / JCM 8858 / NBRC 14720 / NCIMB 2260 / Gabara) (Halobacterium pharaonis), this protein is Protoheme IX farnesyltransferase 2 (ctaB2).